The chain runs to 382 residues: Protein delta homolog 2 (382 aa).

The first 26 residues, 1–26 (MPSGCRCLNLVCLLCILGATSQPARA), serve as a signal peptide directing secretion. EGF-like domains lie at 27-58 (DDCS…LHCE), 62-89 (RMPG…KFCD), 91-129 (DEHI…RGCE), and 131-172 (KAGP…AHCE). The Extracellular portion of the chain corresponds to 27–305 (DDCSSHCDLA…RQEAGLGESS (279 aa)). 17 disulfides stabilise this stretch: Cys-29-Cys-40, Cys-33-Cys-46, Cys-48-Cys-57, Cys-66-Cys-71, Cys-79-Cys-88, Cys-95-Cys-107, Cys-101-Cys-117, Cys-119-Cys-128, Cys-135-Cys-148, Cys-142-Cys-160, Cys-162-Cys-171, Cys-178-Cys-189, Cys-183-Cys-198, Cys-200-Cys-209, Cys-216-Cys-227, Cys-221-Cys-236, and Cys-238-Cys-247. N-linked (GlcNAc...) asparagine glycosylation is present at Asn-157. The region spanning 174-210 (NVDDCLMRPCANGATCIDGINRFSCLCPEGFAGRFCT) is the EGF-like 5; calcium-binding domain. The 37-residue stretch at 212–248 (NLDDCASRPCQRGARCRDRVHDFDCLCPSGYGGKTCE) folds into the EGF-like 6; calcium-binding domain. Residues 306 to 326 (LVALVVFGSLTAALVLATVLL) form a helical membrane-spanning segment. The Cytoplasmic portion of the chain corresponds to 327 to 382 (TLRAWRRGICPTGPCCDPAPHYAPARQDQECQVSMLPAGFPLSPDLPPEPGKTTAL).

It localises to the membrane. Functionally, regulates adipogenesis. This chain is Protein delta homolog 2 (Dlk2), found in Rattus norvegicus (Rat).